The following is a 141-amino-acid chain: Hemoglobin subunit alpha (141 aa).

A Globin domain is found at 1–141 (VLSSKDKTNV…VSTVLTSKYR (141 aa)). Ser3 carries the post-translational modification Phosphoserine. N6-succinyllysine is present on Lys7. At Thr8 the chain carries Phosphothreonine. At Lys11 the chain carries N6-succinyllysine. Lys16 carries the post-translational modification N6-acetyllysine; alternate. Lys16 carries the N6-succinyllysine; alternate modification. Tyr24 carries the phosphotyrosine modification. Lys40 is subject to N6-succinyllysine. Phosphoserine is present on Ser49. Residue His58 participates in O2 binding. Residue His87 participates in heme b binding. Residue Ser102 is modified to Phosphoserine. Thr108 carries the phosphothreonine modification. Position 124 is a phosphoserine (Ser124). Thr134 and Thr137 each carry phosphothreonine. Ser138 bears the Phosphoserine mark.

Belongs to the globin family. Heterotetramer of two alpha chains and two beta chains. Red blood cells.

Involved in oxygen transport from the lung to the various peripheral tissues. Its function is as follows. Hemopressin acts as an antagonist peptide of the cannabinoid receptor CNR1. Hemopressin-binding efficiently blocks cannabinoid receptor CNR1 and subsequent signaling. In Camelus dromedarius (Dromedary), this protein is Hemoglobin subunit alpha (HBA).